The primary structure comprises 293 residues: tRNA pseudouridine synthase A (293 aa).

The active-site Nucleophile is D67. Position 125 (Y125) interacts with substrate.

This sequence belongs to the tRNA pseudouridine synthase TruA family. Homodimer.

The catalysed reaction is uridine(38/39/40) in tRNA = pseudouridine(38/39/40) in tRNA. In terms of biological role, formation of pseudouridine at positions 38, 39 and 40 in the anticodon stem and loop of transfer RNAs. This Synechococcus sp. (strain CC9605) protein is tRNA pseudouridine synthase A.